The following is a 236-amino-acid chain: MAKPLYKRVLLKLSGEALAGEKGFGLDTDTINDIAHQISEITDMGVQVAIVVGGGNFWRGRTGEGMDRTTADYMGMMATVINALALQDALENIEILTRVQTAIEMRQIAEPYIRRRAVRHLEKNRVVIFAAGTGNPYFSTDTTAALRAAEIEAEVILLAKNVDGVYDSDPNINPNAQKLQELTYLDVLQQGLKVMDSTATSLCMDNKIPIKVFGLKQSQNIKKVILGEKIGTHIYS.

12–15 is an ATP binding site; the sequence is KLSG. The involved in allosteric activation by GTP stretch occupies residues 20-25; sequence GEKGFG. Gly54 is a UMP binding site. Positions 55 and 59 each coordinate ATP. UMP is bound by residues Asp72 and 133–140; that span reads TGNPYFST. ATP-binding residues include Asn161, Tyr166, and Asp169.

Belongs to the UMP kinase family. As to quaternary structure, homohexamer.

The protein localises to the cytoplasm. It carries out the reaction UMP + ATP = UDP + ADP. It functions in the pathway pyrimidine metabolism; CTP biosynthesis via de novo pathway; UDP from UMP (UMPK route): step 1/1. Its activity is regulated as follows. Allosterically activated by GTP. Inhibited by UTP. In terms of biological role, catalyzes the reversible phosphorylation of UMP to UDP. This is Uridylate kinase from Alkaliphilus metalliredigens (strain QYMF).